Here is a 146-residue protein sequence, read N- to C-terminus: Small ribosomal subunit protein uS9x (146 aa).

It belongs to the universal ribosomal protein uS9 family.

Its subcellular location is the cytoplasm. This is Small ribosomal subunit protein uS9x (RPS16C) from Arabidopsis thaliana (Mouse-ear cress).